We begin with the raw amino-acid sequence, 353 residues long: G-protein complex alpha subunit gpaA (353 aa).

The segment at 1–25 is disordered; it reads MGCGMSTEDKEGKARNEEIENQLKR. Over residues 7 to 25 the composition is skewed to basic and acidic residues; sequence TEDKEGKARNEEIENQLKR. Residues 32–353 form the G-alpha domain; it reads NEIKMLLLGA…QENLRLCGLI (322 aa). The G1 motif stretch occupies residues 35 to 48; that stretch reads KMLLLGAGESGKST. Positions 47 and 181 each coordinate a divalent metal cation. Residues 173-181 are G2 motif; sequence DVLRSRVKT. A G3 motif region spans residues 196-205; the sequence is YRMFDVGGQR. The G4 motif stretch occupies residues 265–272; it reads ILFLNKID. Positions 323–328 are G5 motif; it reads TCATDT.

It belongs to the G-alpha family. G(q) subfamily. G proteins are composed of 3 units; alpha, beta and gamma. The alpha chain contains the guanine nucleotide binding site. Interacts with gprM.

Its function is as follows. G-protein complex alpha subunit that plays a role in conidiation and regulation of the biosynthesis of secondary metabolites such as dihydroxynaphthalene (DHN)-melanin, via interaction with the G protein-coupled receptor gprM. In Aspergillus fumigatus (strain CBS 144.89 / FGSC A1163 / CEA10) (Neosartorya fumigata), this protein is G-protein complex alpha subunit gpaA.